We begin with the raw amino-acid sequence, 394 residues long: NAD(P)H-quinone oxidoreductase subunit H (394 aa).

It belongs to the complex I 49 kDa subunit family. As to quaternary structure, NDH-1 can be composed of about 15 different subunits; different subcomplexes with different compositions have been identified which probably have different functions.

The protein localises to the cellular thylakoid membrane. It catalyses the reaction a plastoquinone + NADH + (n+1) H(+)(in) = a plastoquinol + NAD(+) + n H(+)(out). It carries out the reaction a plastoquinone + NADPH + (n+1) H(+)(in) = a plastoquinol + NADP(+) + n H(+)(out). In terms of biological role, NDH-1 shuttles electrons from an unknown electron donor, via FMN and iron-sulfur (Fe-S) centers, to quinones in the respiratory and/or the photosynthetic chain. The immediate electron acceptor for the enzyme in this species is believed to be plastoquinone. Couples the redox reaction to proton translocation, and thus conserves the redox energy in a proton gradient. Cyanobacterial NDH-1 also plays a role in inorganic carbon-concentration. This Synechococcus sp. (strain CC9902) protein is NAD(P)H-quinone oxidoreductase subunit H.